The sequence spans 83 residues: Putative defensin-like protein 66 (83 aa).

Residues 1–22 (MGSSRLMITFIVVAMLAISSDL) form the signal peptide. Cystine bridges form between Cys38–Cys82, Cys42–Cys65, Cys51–Cys80, and Cys55–Cys81.

The protein belongs to the DEFL family.

The protein resides in the secreted. In Arabidopsis thaliana (Mouse-ear cress), this protein is Putative defensin-like protein 66.